The following is a 209-amino-acid chain: Auxin-binding protein ABP19a (209 aa).

The first 18 residues, 1 to 18 (MIFPIFFTFFLLLSSSHA), serve as a signal peptide directing secretion. A disulfide bond links Cys-24 and Cys-39. The region spanning 53-199 (SGLGIAGNTT…TTFLDAAQIK (147 aa)) is the Cupin type-1 domain. Asn-60 is a glycosylation site (N-linked (GlcNAc...) asparagine). Positions 101, 103, 108, and 147 each coordinate Mn(2+).

This sequence belongs to the germin family. As to quaternary structure, interacts with ABP20.

It is found in the secreted. The protein localises to the extracellular space. Its subcellular location is the apoplast. It localises to the cell wall. Functionally, probable receptor for the plant growth-promoting hormone auxin. This is Auxin-binding protein ABP19a (ABP19A) from Prunus persica (Peach).